Reading from the N-terminus, the 232-residue chain is Sugar fermentation stimulation protein homolog (232 aa).

The protein belongs to the SfsA family.

The polypeptide is Sugar fermentation stimulation protein homolog (Acidithiobacillus ferrooxidans (strain ATCC 23270 / DSM 14882 / CIP 104768 / NCIMB 8455) (Ferrobacillus ferrooxidans (strain ATCC 23270))).